A 466-amino-acid polypeptide reads, in one-letter code: ATP synthase subunit beta (466 aa).

152 to 159 (GGAGVGKT) is an ATP binding site.

Belongs to the ATPase alpha/beta chains family. In terms of assembly, F-type ATPases have 2 components, CF(1) - the catalytic core - and CF(0) - the membrane proton channel. CF(1) has five subunits: alpha(3), beta(3), gamma(1), delta(1), epsilon(1). CF(0) has three main subunits: a(1), b(2) and c(9-12). The alpha and beta chains form an alternating ring which encloses part of the gamma chain. CF(1) is attached to CF(0) by a central stalk formed by the gamma and epsilon chains, while a peripheral stalk is formed by the delta and b chains.

It localises to the cell inner membrane. It catalyses the reaction ATP + H2O + 4 H(+)(in) = ADP + phosphate + 5 H(+)(out). Its function is as follows. Produces ATP from ADP in the presence of a proton gradient across the membrane. The catalytic sites are hosted primarily by the beta subunits. This Helicobacter acinonychis (strain Sheeba) protein is ATP synthase subunit beta.